We begin with the raw amino-acid sequence, 622 residues long: Phosphomethylpyrimidine synthase (622 aa).

Substrate contacts are provided by residues asparagine 226, methionine 255, tyrosine 284, histidine 320, 340–342 (SRG), 381–384 (DGLR), and glutamate 420. Position 424 (histidine 424) interacts with Zn(2+). A substrate-binding site is contributed by tyrosine 447. Histidine 488 serves as a coordination point for Zn(2+). Cysteine 568, cysteine 571, and cysteine 576 together coordinate [4Fe-4S] cluster.

The protein belongs to the ThiC family. Homodimer. The cofactor is [4Fe-4S] cluster.

The catalysed reaction is 5-amino-1-(5-phospho-beta-D-ribosyl)imidazole + S-adenosyl-L-methionine = 4-amino-2-methyl-5-(phosphooxymethyl)pyrimidine + CO + 5'-deoxyadenosine + formate + L-methionine + 3 H(+). It participates in cofactor biosynthesis; thiamine diphosphate biosynthesis. Its function is as follows. Catalyzes the synthesis of the hydroxymethylpyrimidine phosphate (HMP-P) moiety of thiamine from aminoimidazole ribotide (AIR) in a radical S-adenosyl-L-methionine (SAM)-dependent reaction. This is Phosphomethylpyrimidine synthase from Ruthia magnifica subsp. Calyptogena magnifica.